We begin with the raw amino-acid sequence, 98 residues long: MPSISTNIVLAFITALLGMLIFRSHLMSSLLCLEGMMLSMFILSTLTILNLHFTTSFMMPILLLVFAACEAAVGLALLVTVSNTYGLDYIQNLNLLQC.

Helical transmembrane passes span 2–22 (PSIS…MLIF), 29–49 (SLLC…LTIL), and 61–81 (ILLL…LVTV).

It belongs to the complex I subunit 4L family. As to quaternary structure, core subunit of respiratory chain NADH dehydrogenase (Complex I) which is composed of 45 different subunits.

The protein localises to the mitochondrion inner membrane. The enzyme catalyses a ubiquinone + NADH + 5 H(+)(in) = a ubiquinol + NAD(+) + 4 H(+)(out). Its function is as follows. Core subunit of the mitochondrial membrane respiratory chain NADH dehydrogenase (Complex I) which catalyzes electron transfer from NADH through the respiratory chain, using ubiquinone as an electron acceptor. Part of the enzyme membrane arm which is embedded in the lipid bilayer and involved in proton translocation. This chain is NADH-ubiquinone oxidoreductase chain 4L (MT-ND4L), found in Eulemur rubriventer (Red-bellied lemur).